We begin with the raw amino-acid sequence, 428 residues long: Gamma-glutamyl phosphate reductase (428 aa).

This sequence belongs to the gamma-glutamyl phosphate reductase family.

Its subcellular location is the cytoplasm. It carries out the reaction L-glutamate 5-semialdehyde + phosphate + NADP(+) = L-glutamyl 5-phosphate + NADPH + H(+). The protein operates within amino-acid biosynthesis; L-proline biosynthesis; L-glutamate 5-semialdehyde from L-glutamate: step 2/2. Catalyzes the NADPH-dependent reduction of L-glutamate 5-phosphate into L-glutamate 5-semialdehyde and phosphate. The product spontaneously undergoes cyclization to form 1-pyrroline-5-carboxylate. The chain is Gamma-glutamyl phosphate reductase from Streptomyces coelicolor (strain ATCC BAA-471 / A3(2) / M145).